Consider the following 418-residue polypeptide: MDFLQINGGAKLNGKVKISGAKNAALPLIAMSILAGNDIKISNVPNVADIKTLAQLLRNLGASAEFLNENSLKINTNDINSTKATYDIVRKMRASILVLGPLLARFGHCEVSLPGGCAIGARPIDLHLSALEKMGAEIDIKDGYVVCKGKLKGATISFDKITVTGTENIVMAAALAEGKTKIINAAKEPEVVQLCEMINKSGVKIEGIGTDDLTIYGSGGKLLKFSDFSVIPDRIEAGTYLCAGAITKSKITITNANPNHLVSVLAKFNDMGFNFEINDDEITIIPPKTIKPTEIITSEYPGFPTDMQAQFMALACVADGVSVIDERLFENRFMHVSELSRMGADIKLNGHIATINGTHLNAADVMATDLRASSALVLAALVAKGTSRVHRIYHLDRGYENLELKLRNLGADIQRASE.

22 to 23 (KN) provides a ligand contact to phosphoenolpyruvate. Arginine 93 is a UDP-N-acetyl-alpha-D-glucosamine binding site. Cysteine 117 serves as the catalytic Proton donor. Cysteine 117 carries the 2-(S-cysteinyl)pyruvic acid O-phosphothioketal modification. Residues 122 to 126 (RPIDL), aspartate 306, and leucine 328 contribute to the UDP-N-acetyl-alpha-D-glucosamine site.

Belongs to the EPSP synthase family. MurA subfamily.

The protein localises to the cytoplasm. The catalysed reaction is phosphoenolpyruvate + UDP-N-acetyl-alpha-D-glucosamine = UDP-N-acetyl-3-O-(1-carboxyvinyl)-alpha-D-glucosamine + phosphate. The protein operates within cell wall biogenesis; peptidoglycan biosynthesis. Its function is as follows. Cell wall formation. Adds enolpyruvyl to UDP-N-acetylglucosamine. This is UDP-N-acetylglucosamine 1-carboxyvinyltransferase from Campylobacter hominis (strain ATCC BAA-381 / DSM 21671 / CCUG 45161 / LMG 19568 / NCTC 13146 / CH001A).